The sequence spans 732 residues: Polyribonucleotide nucleotidyltransferase (732 aa).

Positions 502 and 508 each coordinate Mg(2+). A KH domain is found at 569–628 (PRLTSIQIPVDAIGMVIGKGGETIRSITEETGAEINIDDDGTVTIACSSPEGTKAAVETI). In terms of domain architecture, S1 motif spans 638–712 (GTIYMGKVRD…GKTKFALSIK (75 aa)).

It belongs to the polyribonucleotide nucleotidyltransferase family. Mg(2+) serves as cofactor.

The protein resides in the cytoplasm. It catalyses the reaction RNA(n+1) + phosphate = RNA(n) + a ribonucleoside 5'-diphosphate. Functionally, involved in mRNA degradation. Catalyzes the phosphorolysis of single-stranded polyribonucleotides processively in the 3'- to 5'-direction. In Chlorobaculum parvum (strain DSM 263 / NCIMB 8327) (Chlorobium vibrioforme subsp. thiosulfatophilum), this protein is Polyribonucleotide nucleotidyltransferase.